We begin with the raw amino-acid sequence, 170 residues long: Small ribosomal subunit protein uS13 (170 aa).

The span at 128 to 140 shows a compositional bias: basic residues; sequence VRHKRGQKVRGQR. Positions 128–170 are disordered; it reads VRHKRGQKVRGQRTKSTGRTEGTIGVNVEAIKEEQAEDGGDEE.

The protein belongs to the universal ribosomal protein uS13 family. As to quaternary structure, part of the 30S ribosomal subunit. Forms a loose heterodimer with protein S19. Forms two bridges to the 50S subunit in the 70S ribosome.

Functionally, located at the top of the head of the 30S subunit, it contacts several helices of the 16S rRNA. In the 70S ribosome it contacts the 23S rRNA (bridge B1a) and protein L5 of the 50S subunit (bridge B1b), connecting the 2 subunits; these bridges are implicated in subunit movement. The polypeptide is Small ribosomal subunit protein uS13 (Natronomonas pharaonis (strain ATCC 35678 / DSM 2160 / CIP 103997 / JCM 8858 / NBRC 14720 / NCIMB 2260 / Gabara) (Halobacterium pharaonis)).